We begin with the raw amino-acid sequence, 208 residues long: FMN-dependent NADH:quinone oxidoreductase 2 (208 aa).

This sequence belongs to the azoreductase type 1 family. As to quaternary structure, homodimer. The cofactor is FMN.

It catalyses the reaction 2 a quinone + NADH + H(+) = 2 a 1,4-benzosemiquinone + NAD(+). The enzyme catalyses N,N-dimethyl-1,4-phenylenediamine + anthranilate + 2 NAD(+) = 2-(4-dimethylaminophenyl)diazenylbenzoate + 2 NADH + 2 H(+). Quinone reductase that provides resistance to thiol-specific stress caused by electrophilic quinones. In terms of biological role, also exhibits azoreductase activity. Catalyzes the reductive cleavage of the azo bond in aromatic azo compounds to the corresponding amines. This is FMN-dependent NADH:quinone oxidoreductase 2 from Bacillus anthracis.